Reading from the N-terminus, the 751-residue chain is Valine--tRNA ligase (751 aa).

An ATP-binding site is contributed by Lys520.

This sequence belongs to the class-I aminoacyl-tRNA synthetase family. ValS type 2 subfamily.

It localises to the cytoplasm. It catalyses the reaction tRNA(Val) + L-valine + ATP = L-valyl-tRNA(Val) + AMP + diphosphate. In terms of biological role, catalyzes the attachment of valine to tRNA(Val). As ValRS can inadvertently accommodate and process structurally similar amino acids such as threonine, to avoid such errors, it has a 'posttransfer' editing activity that hydrolyzes mischarged Thr-tRNA(Val) in a tRNA-dependent manner. In Nanoarchaeum equitans (strain Kin4-M), this protein is Valine--tRNA ligase (valS).